The following is a 144-amino-acid chain: Large ribosomal subunit protein uL14 (144 aa).

A disordered region spans residues 107–144; it reads NEGYTHSQHSNQREGGERIQAQPSPPHARRAVKTSFCR.

The protein belongs to the universal ribosomal protein uL14 family. As to quaternary structure, part of the 50S ribosomal subunit. Forms a cluster with proteins L3 and L19. In the 70S ribosome, L14 and L19 interact and together make contacts with the 16S rRNA in bridges B5 and B8.

Its function is as follows. Binds to 23S rRNA. Forms part of two intersubunit bridges in the 70S ribosome. This chain is Large ribosomal subunit protein uL14, found in Xanthobacter autotrophicus (strain ATCC BAA-1158 / Py2).